We begin with the raw amino-acid sequence, 171 residues long: uncharacterized protein (171 aa).

Disordered stretches follow at residues 27 to 53 and 82 to 108; these read DCPG…KMVL and GHLE…PSSS. Positions 32–50 are enriched in polar residues; sequence GNNNREPSISTRGRTSSSK.

This is an uncharacterized protein from Homo sapiens (Human).